Reading from the N-terminus, the 398-residue chain is Calreticulin (398 aa).

Positions 1 to 19 are cleaved as a signal peptide; sequence MKAVVLVVVSLLALSSINC. Residues 20–197 are N-domain; that stretch reads DVFFEEKFPD…NEKVESGDLE (178 aa). An intrachain disulfide couples cysteine 105 to cysteine 137. Tyrosine 109, lysine 111, tyrosine 128, and aspartate 135 together coordinate an alpha-D-glucoside. 7 repeat units span residues 191 to 202, 210 to 221, 227 to 238, 244 to 255, 259 to 269, 273 to 283, and 287 to 297. The interval 191–255 is 4 X approximate repeats; that stretch reads VESGDLEADW…DATKPEDWDD (65 aa). A P-domain region spans residues 198 to 308; sequence ADWDFLPNKK…YTPDSNLYKR (111 aa). Residues 207 to 251 are compositionally biased toward basic and acidic residues; that stretch reads KIKDPEAKKPEDWDDKPTIPDPEDKKPEDWDKPEHIPDPDATKPE. Residues 207 to 257 form a disordered region; it reads KIKDPEAKKPEDWDDKPTIPDPEDKKPEDWDKPEHIPDPDATKPEDWDDEM. Positions 259–297 are 3 X approximate repeats; the sequence is GEWEPPMIDNPDYKGVWAPKQIDNPAYKGPWVHPEIDNP. The segment at 309-398 is C-domain; the sequence is DEICAVGLDL…AAPVEEHDEL (90 aa). Residue aspartate 317 coordinates an alpha-D-glucoside. Positions 334–398 are disordered; it reads DDPAAAKERG…AAPVEEHDEL (65 aa). Positions 337–372 are enriched in basic and acidic residues; the sequence is AAAKERGEVIKKRQEGEKKMKSEQDEAEREKEKAEK. Residues 373–387 are compositionally biased toward acidic residues; it reads PDDEEDDEDLDDETG. A Prevents secretion from ER motif is present at residues 395–398; it reads HDEL.

The protein belongs to the calreticulin family. Monomer. As to expression, expressed in fat bodies. Not expressed in midgut, silk gland, ovary or testis.

It localises to the endoplasmic reticulum lumen. In terms of biological role, molecular calcium-binding chaperone promoting folding, oligomeric assembly and quality control in the ER via the calreticulin/calnexin cycle. This lectin may interact transiently with almost all of the monoglucosylated glycoproteins that are synthesized in the ER. The sequence is that of Calreticulin from Bombyx mori (Silk moth).